The primary structure comprises 413 residues: L-methionine gamma-lyase (413 aa).

Residues 75 to 77 (YGR) and 105 to 106 (GM) each bind pyridoxal 5'-phosphate. Y131 provides a ligand contact to substrate. A pyridoxal 5'-phosphate-binding site is contributed by 218 to 220 (SAT). K221 is subject to N6-(pyridoxal phosphate)lysine. R365 serves as a coordination point for substrate. The segment at 388 to 413 (RLPETAGAGREPSRTALRLPERAADR) is disordered.

This sequence belongs to the trans-sulfuration enzymes family. As to quaternary structure, homotetramer; dimer of active dimers. Pyridoxal 5'-phosphate serves as cofactor.

It carries out the reaction L-methionine + H2O = methanethiol + 2-oxobutanoate + NH4(+). The enzyme catalyses L-homocysteine + H2O = 2-oxobutanoate + hydrogen sulfide + NH4(+) + H(+). It catalyses the reaction L-cysteine + H2O = hydrogen sulfide + pyruvate + NH4(+) + H(+). Its function is as follows. Catalyzes the alpha,gamma-elimination of L-methionine to produce methanethiol, 2-oxobutanoate and ammonia. Is probably involved in L-methionine catabolism. Is also able to catalyze the alpha,gamma-elimination of L-homocysteine, and, to a lesser extent, the alpha,beta-elimination of L-cysteine. This chain is L-methionine gamma-lyase, found in Streptomyces avermitilis (strain ATCC 31267 / DSM 46492 / JCM 5070 / NBRC 14893 / NCIMB 12804 / NRRL 8165 / MA-4680).